The primary structure comprises 251 residues: uncharacterized protein (251 aa).

Residues 1-25 form the signal peptide; the sequence is MRKKKFLSRFSFSSLFLLCGTLLSA. The N-palmitoyl cysteine moiety is linked to residue C26. C26 carries the S-diacylglycerol cysteine lipid modification.

Belongs to the MG439/MG440 family.

The protein resides in the cell membrane. This is an uncharacterized protein from Mycoplasma pneumoniae (strain ATCC 29342 / M129 / Subtype 1) (Mycoplasmoides pneumoniae).